Reading from the N-terminus, the 118-residue chain is Beta-2-microglobulin (118 aa).

Positions 1 to 20 (MARFVALVLLGLLSLSGLDA) are cleaved as a signal peptide. Positions 25 to 112 (PKIQVYSRHP…HVTLEQPRIV (88 aa)) constitute an Ig-like C1-type domain. A disulfide bridge connects residues Cys45 and Cys99.

This sequence belongs to the beta-2-microglobulin family. As to quaternary structure, heterodimer of an alpha chain and a beta chain. Beta-2-microglobulin is the beta-chain of major histocompatibility complex class I molecules. Forms a heterotrimer with MR1 and a metabolite antigen.

The protein localises to the secreted. In terms of biological role, component of the class I major histocompatibility complex (MHC). Involved in the presentation of peptide antigens to the immune system. The sequence is that of Beta-2-microglobulin (B2M) from Bos taurus (Bovine).